The primary structure comprises 452 residues: GATA-binding factor 2 (452 aa).

Residues 130–182 (GGSLYPGTGSSACPSSSHSSPHLFGFPPTPPKDVSPDPGPASPPSSSRLEDKD) form a disordered region. A compositionally biased stretch (low complexity) spans 139–151 (SSACPSSSHSSPH). The segment covering 156–172 (PPTPPKDVSPDPGPASP) has biased composition (pro residues). GATA-type zinc fingers lie at residues 267 to 291 (CVNC…CNAC) and 321 to 345 (CANC…CNAC). The segment covering 426-438 (QTPTPIHPSSSLS) has biased composition (polar residues). Residues 426 to 452 (QTPTPIHPSSSLSFGHPHHSSMVTAMG) form a disordered region.

In terms of tissue distribution, expressed in the developing ventral blood island, and in the embryonic nervous system.

It is found in the nucleus. This is GATA-binding factor 2 (gata2) from Xenopus laevis (African clawed frog).